A 78-amino-acid chain; its full sequence is Large ribosomal subunit protein bL28 (78 aa).

Belongs to the bacterial ribosomal protein bL28 family.

The protein is Large ribosomal subunit protein bL28 of Psychrobacter arcticus (strain DSM 17307 / VKM B-2377 / 273-4).